An 87-amino-acid polypeptide reads, in one-letter code: MSVKIRLARFGAKKRPFYRVVVADSRVARDGRFIELLGFYNPMLPKEHPSFLKVKIDRLKYWLSVGAQPTERISWFIKKGLISTEAA.

This sequence belongs to the bacterial ribosomal protein bS16 family.

This chain is Small ribosomal subunit protein bS16, found in Ehrlichia ruminantium (strain Gardel).